The chain runs to 98 residues: NADH-ubiquinone oxidoreductase chain 4L (98 aa).

The next 3 helical transmembrane spans lie at 1–21, 29–49, and 61–81; these read MSLV…GLLM, SLLC…LMIL, and IILL…LVMV.

This sequence belongs to the complex I subunit 4L family. Core subunit of respiratory chain NADH dehydrogenase (Complex I) which is composed of 45 different subunits.

It localises to the mitochondrion inner membrane. It catalyses the reaction a ubiquinone + NADH + 5 H(+)(in) = a ubiquinol + NAD(+) + 4 H(+)(out). Core subunit of the mitochondrial membrane respiratory chain NADH dehydrogenase (Complex I) which catalyzes electron transfer from NADH through the respiratory chain, using ubiquinone as an electron acceptor. Part of the enzyme membrane arm which is embedded in the lipid bilayer and involved in proton translocation. In Ovis aries (Sheep), this protein is NADH-ubiquinone oxidoreductase chain 4L (MT-ND4L).